We begin with the raw amino-acid sequence, 84 residues long: MSGGSTGERPFSDIITSVRYWVIHSITIPALFVAGWLFVSTGLAYDVFGTPRPNEYFTQDRQQVPLVNDRFNAKQELEDLTKGI.

A helical membrane pass occupies residues valine 22–tryptophan 36. Histidine 24 is a binding site for heme.

This sequence belongs to the PsbE/PsbF family. As to quaternary structure, heterodimer of an alpha subunit and a beta subunit. PSII is composed of 1 copy each of membrane proteins PsbA, PsbB, PsbC, PsbD, PsbE, PsbF, PsbH, PsbI, PsbJ, PsbK, PsbL, PsbM, PsbT, PsbX, PsbY, PsbZ, Psb30/Ycf12, at least 3 peripheral proteins of the oxygen-evolving complex and a large number of cofactors. It forms dimeric complexes. Requires heme b as cofactor.

It is found in the plastid. The protein localises to the chloroplast thylakoid membrane. In terms of biological role, this b-type cytochrome is tightly associated with the reaction center of photosystem II (PSII). PSII is a light-driven water:plastoquinone oxidoreductase that uses light energy to abstract electrons from H(2)O, generating O(2) and a proton gradient subsequently used for ATP formation. It consists of a core antenna complex that captures photons, and an electron transfer chain that converts photonic excitation into a charge separation. This is Cytochrome b559 subunit alpha from Porphyra purpurea (Red seaweed).